The sequence spans 229 residues: MYTINKNIIVINKPINWTSNDVVQKVKRIIKAKKVGHAGTLDPNASGILVLGINEGTKLLTKLTLDSKTYVAEIQFGISTNTYDSTGEIISKINKFITLTEIESAIENLYKNEYWQKPPKFSALKINGKKAYELARNNISFEIEPRLVKIFEYNILDFNYEKQILKIIIKVSKGFYVRSFAVDLAARINNLAHLLSLVRTESGQFSINDAIEIEQVYDYWNNINKHSTN.

Asp42 acts as the Nucleophile in catalysis.

The protein belongs to the pseudouridine synthase TruB family. Type 1 subfamily.

The catalysed reaction is uridine(55) in tRNA = pseudouridine(55) in tRNA. Functionally, responsible for synthesis of pseudouridine from uracil-55 in the psi GC loop of transfer RNAs. This Ureaplasma urealyticum serovar 10 (strain ATCC 33699 / Western) protein is tRNA pseudouridine synthase B.